Consider the following 754-residue polypeptide: Elongation factor G-2, mitochondrial (754 aa).

A tr-type G domain is found at 63–340 (DKLRNIGISA…GVVSFLPSPN (278 aa)). GTP-binding positions include 72 to 79 (AHIDSGKT), 139 to 143 (DTPGH), and 193 to 196 (NKLD).

Belongs to the TRAFAC class translation factor GTPase superfamily. Classic translation factor GTPase family. EF-G/EF-2 subfamily. Expressed in cotyledons and adult leaves at the same levels.

It localises to the mitochondrion. It participates in protein biosynthesis; polypeptide chain elongation. Functionally, mitochondrial GTPase that catalyzes the GTP-dependent ribosomal translocation step during translation elongation. During this step, the ribosome changes from the pre-translocational (PRE) to the post-translocational (POST) state as the newly formed A-site-bound peptidyl-tRNA and P-site-bound deacylated tRNA move to the P and E sites, respectively. Catalyzes the coordinated movement of the two tRNA molecules, the mRNA and conformational changes in the ribosome. This chain is Elongation factor G-2, mitochondrial (MEFG2), found in Arabidopsis thaliana (Mouse-ear cress).